The sequence spans 142 residues: Large ribosomal subunit protein uL13 (142 aa).

This sequence belongs to the universal ribosomal protein uL13 family. As to quaternary structure, part of the 50S ribosomal subunit.

Its function is as follows. This protein is one of the early assembly proteins of the 50S ribosomal subunit, although it is not seen to bind rRNA by itself. It is important during the early stages of 50S assembly. In Leptothrix cholodnii (strain ATCC 51168 / LMG 8142 / SP-6) (Leptothrix discophora (strain SP-6)), this protein is Large ribosomal subunit protein uL13.